The primary structure comprises 429 residues: UDP-N-acetylglucosamine 1-carboxyvinyltransferase (429 aa).

Phosphoenolpyruvate is bound at residue lysine 22–asparagine 23. Arginine 102 lines the UDP-N-acetyl-alpha-D-glucosamine pocket. The active-site Proton donor is the cysteine 126. Cysteine 126 carries the 2-(S-cysteinyl)pyruvic acid O-phosphothioketal modification. UDP-N-acetyl-alpha-D-glucosamine-binding positions include arginine 131–leucine 135, aspartate 316, and isoleucine 338.

Belongs to the EPSP synthase family. MurA subfamily.

The protein resides in the cytoplasm. The catalysed reaction is phosphoenolpyruvate + UDP-N-acetyl-alpha-D-glucosamine = UDP-N-acetyl-3-O-(1-carboxyvinyl)-alpha-D-glucosamine + phosphate. It functions in the pathway cell wall biogenesis; peptidoglycan biosynthesis. Cell wall formation. Adds enolpyruvyl to UDP-N-acetylglucosamine. The protein is UDP-N-acetylglucosamine 1-carboxyvinyltransferase of Nitrobacter winogradskyi (strain ATCC 25391 / DSM 10237 / CIP 104748 / NCIMB 11846 / Nb-255).